The chain runs to 521 residues: Cyclic AMP-responsive element-binding protein 3-like protein 2 (521 aa).

Topologically, residues 1–378 are cytoplasmic; sequence MEVLESGEQS…CKLAGTQTGT (378 aa). Polar residues predominate over residues 83–103; sequence YSLSEEPRTQSPFTHAATSDS. Positions 83 to 106 are disordered; that stretch reads YSLSEEPRTQSPFTHAATSDSFND. Residue serine 93 is modified to Phosphoserine. A Glycyl lysine isopeptide (Lys-Gly) (interchain with G-Cter in SUMO2) cross-link involves residue lysine 178. Position 191 is a phosphoserine (serine 191). The tract at residues 196–264 is disordered; sequence SVDQLHLPPT…PHKLQGSGPL (69 aa). The segment covering 208–220 has biased composition (low complexity); sequence SSHSSDSEGSLSP. A bZIP domain is found at 294-357; it reads ALKKIRRKIK…RTLLQQLQKL (64 aa). Residues 296–325 are basic motif; that stretch reads KKIRRKIKNKISAQESRRKKKEYMDSLEKK. The interval 336 to 357 is leucine-zipper; sequence LRKKVEVLENTNRTLLQQLQKL. The helical; Signal-anchor for type II membrane protein transmembrane segment at 379 to 399 threads the bilayer; sequence CLMVVVLCFAVAFGSFFQGYG. Residues 400–521 lie on the Lumenal side of the membrane; the sequence is PYPSATKMAL…ELERRVNATF (122 aa). The S1P recognition signature appears at 427 to 430; that stretch reads RNLL. N-linked (GlcNAc...) asparagine glycosylation is found at asparagine 481, asparagine 505, and asparagine 518.

It belongs to the bZIP family. ATF subfamily. In terms of assembly, binds DNA as a dimer. Post-translationally, upon ER stress, translocated to the Golgi apparatus, where it is processed by regulated intramembrane proteolysis (RIP) to release the cytosol-facing N-terminal transcription factor domain. The cleavage is performed sequentially by site-1 and site-2 proteases (S1P/MBTPS1 and S2P/MBTPS2). N-glycosylated. In terms of processing, ubiquitinated by HRD1/SYVN1; undergoes 'Lys-48'-linked ubiquitination, followed by rapid proteasomal degradation under normal conditions. Upon ER stress, SYVN1 E3 ubiquitin-protein ligase dissociates from its substrate, ubiquitination does not occur and CREB3L2 is stabilized. As to expression, widely expressed, including in lung, bladder, ovary, testis and spleen. Highly expressed in chondrocytes.

It is found in the endoplasmic reticulum membrane. The protein localises to the nucleus. In terms of biological role, transcription factor involved in unfolded protein response (UPR). In the absence of endoplasmic reticulum (ER) stress, inserted into ER membranes, with N-terminal DNA-binding and transcription activation domains oriented toward the cytosolic face of the membrane. In response to ER stress, transported to the Golgi, where it is cleaved in a site-specific manner by resident proteases S1P/MBTPS1 and S2P/MBTPS2. The released N-terminal cytosolic domain is translocated to the nucleus to effect transcription of specific target genes. Plays a critical role in chondrogenesis by activating the transcription of SEC23A, which promotes the transport and secretion of cartilage matrix proteins, and possibly that of ER biogenesis-related genes. In a neuroblastoma cell line, protects cells from ER stress-induced death. In vitro activates transcription of target genes via direct binding to the CRE site. In Mus musculus (Mouse), this protein is Cyclic AMP-responsive element-binding protein 3-like protein 2 (Creb3l2).